The sequence spans 453 residues: uncharacterized protein (453 aa).

The 59-residue stretch at 5 to 63 (LLKKNQSIELTIEDLTHDGSGVGKIDGYPLFIPNTLPGEKVTAKIIKLNKNYGFARMEN) folds into the TRAM domain. Residues Cys-76, Cys-82, Cys-85, and Cys-162 each contribute to the [4Fe-4S] cluster site. S-adenosyl-L-methionine-binding residues include Gln-285, Tyr-314, Glu-335, and Asp-383. Cys-410 serves as the catalytic Nucleophile.

This sequence belongs to the class I-like SAM-binding methyltransferase superfamily. RNA M5U methyltransferase family.

This is an uncharacterized protein from Listeria monocytogenes serotype 4b (strain F2365).